A 253-amino-acid polypeptide reads, in one-letter code: Putative tyrosine-protein phosphatase OCA1 (253 aa).

Residues 1-21 (MHRTSIVEELERHQQDQKADQ) show a composition bias toward basic and acidic residues. Residues 1–84 (MHRTSIVEEL…PRMKTIVKPP (84 aa)) are disordered. Polar residues predominate over residues 27–65 (SDASNSALQESSDPRLSTTDNTNTPEINVNDQQQEQQVA). The Tyrosine-protein phosphatase domain occupies 93 to 249 (NFGPVERNLY…IIVYPESAPE (157 aa)). C186 acts as the Phosphocysteine intermediate in catalysis.

The protein belongs to the protein-tyrosine phosphatase family.

Its subcellular location is the cytoplasm. It carries out the reaction O-phospho-L-tyrosyl-[protein] + H2O = L-tyrosyl-[protein] + phosphate. Putative tyrosine-protein phosphatase required for protection against superoxide stress. In Yarrowia lipolytica (strain CLIB 122 / E 150) (Yeast), this protein is Putative tyrosine-protein phosphatase OCA1 (OCA1).